The primary structure comprises 89 residues: Small ribosomal subunit protein uS15 (89 aa).

This sequence belongs to the universal ribosomal protein uS15 family. In terms of assembly, part of the 30S ribosomal subunit. Forms a bridge to the 50S subunit in the 70S ribosome, contacting the 23S rRNA.

In terms of biological role, one of the primary rRNA binding proteins, it binds directly to 16S rRNA where it helps nucleate assembly of the platform of the 30S subunit by binding and bridging several RNA helices of the 16S rRNA. Functionally, forms an intersubunit bridge (bridge B4) with the 23S rRNA of the 50S subunit in the ribosome. The polypeptide is Small ribosomal subunit protein uS15 (Pseudomonas fluorescens (strain Pf0-1)).